The sequence spans 672 residues: Flap endonuclease 1 (672 aa).

An N-domain region spans residues 1 to 106 (MGIKGLTKFI…SELEKRGEKR (106 aa)). D34 contributes to the Mg(2+) binding site. Residues R47 and R72 each contribute to the DNA site. 5 residues coordinate Mg(2+): D88, E160, E162, D181, and D183. The tract at residues 124–266 (EIKKQSGRTV…KTAYNLIKEY (143 aa)) is I-domain. E160 contacts DNA. DNA contacts are provided by G244 and D246. D246 is a binding site for Mg(2+). The interaction with PCNA stretch occupies residues 349–357 (TQRRLDNFF). Residues 371–610 (ETKKEQTLPA…EDSPNSYNNI (240 aa)) are disordered. Composition is skewed to basic and acidic residues over residues 413–493 (MKEE…KKSL), 502–526 (DSDK…EKIN), and 535–548 (DHSR…KDNI). Positions 549-584 (SDINNNNNNNNSSSNNNNISNNHFNSVSSNSTFNSS) are enriched in low complexity. The span at 587-603 (LKSEDTLKSNSPLKEDS) shows a compositional bias: basic and acidic residues.

Belongs to the XPG/RAD2 endonuclease family. FEN1 subfamily. In terms of assembly, interacts with PCNA1 and PCNA2. Three molecules of FEN1 bind to one PCNA trimer with each molecule binding to one PCNA monomer. PCNA stimulates the nuclease activity without altering cleavage specificity. Mg(2+) serves as cofactor. Post-translationally, phosphorylated. Phosphorylation upon DNA damage induces relocalization to the nuclear plasma.

Its subcellular location is the nucleus. It localises to the nucleolus. The protein localises to the nucleoplasm. The protein resides in the mitochondrion. Functionally, structure-specific nuclease with 5'-flap endonuclease and 5'-3' exonuclease activities involved in DNA replication and repair. During DNA replication, cleaves the 5'-overhanging flap structure that is generated by displacement synthesis when DNA polymerase encounters the 5'-end of a downstream Okazaki fragment. It enters the flap from the 5'-end and then tracks to cleave the flap base, leaving a nick for ligation. Also involved in the long patch base excision repair (LP-BER) pathway, by cleaving within the apurinic/apyrimidinic (AP) site-terminated flap. Acts as a genome stabilization factor that prevents flaps from equilibrating into structures that lead to duplications and deletions. Also possesses 5'-3' exonuclease activity on nicked or gapped double-stranded DNA, and exhibits RNase H activity. Also involved in replication and repair of rDNA and in repairing mitochondrial DNA. The sequence is that of Flap endonuclease 1 from Plasmodium falciparum (isolate 3D7).